Here is a 146-residue protein sequence, read N- to C-terminus: Cystatin-C (146 aa).

Positions 1-26 (MAGPLRAPLLLLAILAVALAVSPAAG) are cleaved as a signal peptide. Ser43 carries the post-translational modification Phosphoserine; by FAM20C. A Secondary area of contact motif is present at residues 81–85 (QIVAG). 2 cysteine pairs are disulfide-bonded: Cys99/Cys109 and Cys123/Cys143.

The protein belongs to the cystatin family. Homodimer. Post-translationally, the Thr-25 variant is O-glycosylated with a core 1 or possibly core 8 glycan. The signal peptide of the O-glycosylated Thr-25 variant is cleaved between Ala-20 and Val-21. Expressed in submandibular and sublingual saliva but not in parotid saliva (at protein level). Expressed in various body fluids, such as the cerebrospinal fluid and plasma. Expressed in highest levels in the epididymis, vas deferens, brain, thymus, and ovary and the lowest in the submandibular gland.

It localises to the secreted. Functionally, as an inhibitor of cysteine proteinases, this protein is thought to serve an important physiological role as a local regulator of this enzyme activity. The sequence is that of Cystatin-C (CST3) from Homo sapiens (Human).